Consider the following 630-residue polypeptide: Lysophospholipase 3 (630 aa).

The signal sequence occupies residues 1–16; the sequence is MKALLSLLTAVAVATA. The PLA2c domain occupies 39-587; sequence SCPATRPSIR…KEYCWNGTVD (549 aa). Residues Asn56, Asn95, Asn164, Asn220, Asn283, Asn351, Asn390, Asn443, Asn456, Asn462, Asn493, Asn514, Asn542, Asn566, and Asn583 are each glycosylated (N-linked (GlcNAc...) asparagine). A lipid anchor (GPI-like-anchor amidated asparagine) is attached at Asn606. A propeptide spans 607–630 (removed in mature form); it reads AAYTQGVTWLVGILAVGVAMGMTA.

Belongs to the lysophospholipase family. Post-translationally, the GPI-like anchor contains a phosphoceramide lipid group.

The protein resides in the cell membrane. The enzyme catalyses a 1-acyl-sn-glycero-3-phosphocholine + H2O = sn-glycerol 3-phosphocholine + a fatty acid + H(+). Its function is as follows. Catalyzes the release of fatty acids from lysophospholipids. The polypeptide is Lysophospholipase 3 (plb3) (Aspergillus fumigatus (strain CBS 144.89 / FGSC A1163 / CEA10) (Neosartorya fumigata)).